The following is a 1029-amino-acid chain: Translation initiation factor IF-2 (1029 aa).

Positions Arg-73–Glu-441 are disordered. 2 stretches are compositionally biased toward acidic residues: residues Thr-106–Glu-121 and Ala-148–Glu-177. Basic and acidic residues predominate over residues Ala-183 to Lys-196. 3 stretches are compositionally biased toward acidic residues: residues Thr-213–Ala-234, Thr-242–Val-258, and Ala-279–Gly-322. The segment covering Lys-358 to Asp-372 has biased composition (basic and acidic residues). Basic residues predominate over residues Lys-373–Lys-386. The segment covering Gln-400 to Gln-411 has biased composition (low complexity). Basic residues predominate over residues Arg-417–Arg-427. Residues His-428–Glu-441 are compositionally biased toward basic and acidic residues. Residues Pro-524–Lys-696 enclose the tr-type G domain. The segment at Gly-533–Thr-540 is G1. Gly-533–Thr-540 is a binding site for GTP. Positions Gly-558–His-562 are G2. The segment at Asp-582–Gly-585 is G3. GTP-binding positions include Asp-582–His-586 and Asn-636–Asp-639. Residues Asn-636 to Asp-639 are G4. The interval Ser-672–Lys-674 is G5.

This sequence belongs to the TRAFAC class translation factor GTPase superfamily. Classic translation factor GTPase family. IF-2 subfamily.

The protein localises to the cytoplasm. One of the essential components for the initiation of protein synthesis. Protects formylmethionyl-tRNA from spontaneous hydrolysis and promotes its binding to the 30S ribosomal subunits. Also involved in the hydrolysis of GTP during the formation of the 70S ribosomal complex. This chain is Translation initiation factor IF-2, found in Salinibacter ruber (strain DSM 13855 / M31).